We begin with the raw amino-acid sequence, 216 residues long: 3-isopropylmalate dehydratase small subunit (216 aa).

This sequence belongs to the LeuD family. LeuD type 1 subfamily. In terms of assembly, heterodimer of LeuC and LeuD.

It carries out the reaction (2R,3S)-3-isopropylmalate = (2S)-2-isopropylmalate. It participates in amino-acid biosynthesis; L-leucine biosynthesis; L-leucine from 3-methyl-2-oxobutanoate: step 2/4. In terms of biological role, catalyzes the isomerization between 2-isopropylmalate and 3-isopropylmalate, via the formation of 2-isopropylmaleate. This Cupriavidus pinatubonensis (strain JMP 134 / LMG 1197) (Cupriavidus necator (strain JMP 134)) protein is 3-isopropylmalate dehydratase small subunit.